Here is a 210-residue protein sequence, read N- to C-terminus: MSKKFKMKRAKNLNGFSIIHDYVTPDQEKKLLKKINESEWVVDYQRRLQYYNYRNELFEPYDLIPIPNKIPKYLDQLINQMILDKIIDQKPDQIIVNEYKPGEGLKPHFDRKDYYQNVIIGLSLGSGTIMEFYKNKPIPEKKKIYIPPRSLYIIKDDARYIWKHGIPPRKYDEINGKKIPRETRISITFRNVIKEKVKHDNIVYPKRSPN.

The 104-residue stretch at 90–193 folds into the Fe2OG dioxygenase domain; it reads KPDQIIVNEY…RISITFRNVI (104 aa).

This is an uncharacterized protein from Acanthamoeba polyphaga (Amoeba).